Reading from the N-terminus, the 208-residue chain is Outer-membrane lipoprotein carrier protein (208 aa).

The first 22 residues, 1-22 (MKKRLCAVLLASPLLFSAAVFA), serve as a signal peptide directing secretion.

The protein belongs to the LolA family. Monomer.

It localises to the periplasm. Participates in the translocation of lipoproteins from the inner membrane to the outer membrane. Only forms a complex with a lipoprotein if the residue after the N-terminal Cys is not an aspartate (The Asp acts as a targeting signal to indicate that the lipoprotein should stay in the inner membrane). The sequence is that of Outer-membrane lipoprotein carrier protein from Shewanella baltica (strain OS195).